A 465-amino-acid chain; its full sequence is DEAD-box ATP-dependent RNA helicase 55 (465 aa).

The Q motif motif lies at 17–45 (FSELKPPLSEDIIEALDRSGFEVCTPVQA). The Helicase ATP-binding domain occupies 48–219 (IPFLCSHKDV…KAGLRNPYLK (172 aa)). 61–68 (AATGSGKT) provides a ligand contact to ATP. A DEAD box motif is present at residues 167-170 (DEAD). Residues 228 to 422 (QLVHLLIENK…KDKLQQEKRG (195 aa)) form the Helicase C-terminal domain. The disordered stretch occupies residues 413 to 465 (KDKLQQEKRGKRKKSSKEAVDDSNKASRKRKLTGRQRQTIQTAQDEEEMNLRL). The span at 428-437 (SKEAVDDSNK) shows a compositional bias: basic and acidic residues. Over residues 456 to 465 (QDEEEMNLRL) the composition is skewed to acidic residues.

The protein belongs to the DEAD box helicase family. DDX55/SPB4 subfamily.

It catalyses the reaction ATP + H2O = ADP + phosphate + H(+). The protein is DEAD-box ATP-dependent RNA helicase 55 (RH55) of Arabidopsis thaliana (Mouse-ear cress).